A 246-amino-acid chain; its full sequence is MAAPGPALCLFDVDGTLTAPRQKITKDMDCFLQKLRQKIKIGVVGGSDFEKVQEQLGDDVIKKYDYVFPENGLVAYRDGKLLCKQNIQGHLGEALIQDLINYCLSYIAKIKLPKKRGTFIEFRNGMLNVSPIGRSCSQEERIEFYELDQKENIRQKFVEDLRKEFAGKGLTFSIGGQISFDVFPDGWDKRYCLGHVEKDGYKTIYFFGDKTMPGGNDHEIFTDPRTVGYTVAAPEDTRRICEELFC.

The residue at position 2 (Ala-2) is an N-acetylalanine. Catalysis depends on Asp-12, which acts as the Nucleophile. Asp-12 and Asp-14 together coordinate Mg(2+). The active-site Proton donor/acceptor is Asp-14. The alpha-D-mannose 1-phosphate site is built by Arg-21, Arg-123, Arg-134, Arg-141, Ser-179, and Asp-181. 4 residues coordinate Mg(2+): Asp-209, Phe-221, Asp-223, and Thr-226.

The protein belongs to the eukaryotic PMM family. Homodimer.

The protein resides in the cytoplasm. The catalysed reaction is alpha-D-mannose 1-phosphate = D-mannose 6-phosphate. It participates in nucleotide-sugar biosynthesis; GDP-alpha-D-mannose biosynthesis; alpha-D-mannose 1-phosphate from D-fructose 6-phosphate: step 2/2. Its function is as follows. Involved in the synthesis of the GDP-mannose and dolichol-phosphate-mannose required for a number of critical mannosyl transfer reactions. This Bos taurus (Bovine) protein is Phosphomannomutase 2 (PMM2).